The sequence spans 466 residues: UDP-N-acetylmuramoylalanine--D-glutamate ligase (466 aa).

127–133 (GSNGKST) serves as a coordination point for ATP.

The protein belongs to the MurCDEF family.

It is found in the cytoplasm. The catalysed reaction is UDP-N-acetyl-alpha-D-muramoyl-L-alanine + D-glutamate + ATP = UDP-N-acetyl-alpha-D-muramoyl-L-alanyl-D-glutamate + ADP + phosphate + H(+). It functions in the pathway cell wall biogenesis; peptidoglycan biosynthesis. Functionally, cell wall formation. Catalyzes the addition of glutamate to the nucleotide precursor UDP-N-acetylmuramoyl-L-alanine (UMA). In Ruegeria pomeroyi (strain ATCC 700808 / DSM 15171 / DSS-3) (Silicibacter pomeroyi), this protein is UDP-N-acetylmuramoylalanine--D-glutamate ligase.